Here is a 603-residue protein sequence, read N- to C-terminus: MLNDLKFSPAFKSFVDTSFFHELSRLKLEVFKLDSAEKELFSALDLENITSNTVSLSLRDDSFDPVLNNEAVTLKGSVLNFNTIESFKSCDKVKFIKEKGQQLLEQGLKNGLKECVRFYVISFADLKKYKFYYWVCMPTFQSEGSSYEIISTKSIEDGVKKDIWEQNSFISCVVDGKIQEASPQYLKVCQKVIFKDFSRLKGIPAAVTKNFLTVWSQISTRNTYTICFLRDDNSSFAAEIRVTGSNTGCLKVSGWEKNGLGKLAPKSADLSSLMDPVKIAEQSIDLNLKLMKWRIAPDIDLERIKNIKALILGSGTLGCYVARALLAWGTRHVTFVDNSTVSFSNPVRQPLFNFEDCGRPKAEAASDSLKKIFPSVVSAGYQLEIPMIGHPVSNESKQRKDYEILDELIRTHDVIFLLMDARETRWLPSVLGRMHEKIVINAALGFDSYLVMRHGNNNDNLGCYFCNDIVAPSDSLTDRTLDQMCTVTRPGVALLAASQAVELLVTYLQPSTNVLGSAPHQIRGFLNEFKTVKLETPAYQHCCASNENVILTLKENGWNFVKQALDDYKCVEQLSGLSKVQEEAELAIQEDISFDDDEELSIE.

The GXGXXG motif signature appears at 313 to 318; it reads GSGTLG. Catalysis depends on C485, which acts as the Glycyl thioester intermediate.

Belongs to the ATG7 family. Homodimer.

It localises to the cytoplasm. The protein localises to the preautophagosomal structure. Its function is as follows. E1-like activating enzyme involved in the 2 ubiquitin-like systems required for cytoplasm to vacuole transport (Cvt) and autophagy. Activates ATG12 for its conjugation with ATG5 and ATG8 for its conjugation with phosphatidylethanolamine. Both systems are needed for the ATG8 association to Cvt vesicles and autophagosomes membranes. Autophagy is essential for maintenance of amino acid levels and protein synthesis under nitrogen starvation. Required for selective autophagic degradation of the nucleus (nucleophagy) as well as for mitophagy which contributes to regulate mitochondrial quantity and quality by eliminating the mitochondria to a basal level to fulfill cellular energy requirements and preventing excess ROS production. Plays a role in the regulation of filamentous growth and chronological longevity. The polypeptide is Ubiquitin-like modifier-activating enzyme ATG7 (ATG7) (Kluyveromyces lactis (strain ATCC 8585 / CBS 2359 / DSM 70799 / NBRC 1267 / NRRL Y-1140 / WM37) (Yeast)).